The primary structure comprises 229 residues: Enolase-phosphatase E1 (229 aa).

This sequence belongs to the HAD-like hydrolase superfamily. MasA/MtnC family. Monomer. Mg(2+) serves as cofactor.

The enzyme catalyses 5-methylsulfanyl-2,3-dioxopentyl phosphate + H2O = 1,2-dihydroxy-5-(methylsulfanyl)pent-1-en-3-one + phosphate. It participates in amino-acid biosynthesis; L-methionine biosynthesis via salvage pathway; L-methionine from S-methyl-5-thio-alpha-D-ribose 1-phosphate: step 3/6. The protein operates within amino-acid biosynthesis; L-methionine biosynthesis via salvage pathway; L-methionine from S-methyl-5-thio-alpha-D-ribose 1-phosphate: step 4/6. In terms of biological role, bifunctional enzyme that catalyzes the enolization of 2,3-diketo-5-methylthiopentyl-1-phosphate (DK-MTP-1-P) into the intermediate 2-hydroxy-3-keto-5-methylthiopentenyl-1-phosphate (HK-MTPenyl-1-P), which is then dephosphorylated to form the acireductone 1,2-dihydroxy-3-keto-5-methylthiopentene (DHK-MTPene). This is Enolase-phosphatase E1 from Pectobacterium carotovorum subsp. carotovorum (strain PC1).